We begin with the raw amino-acid sequence, 105 residues long: Small ribosomal subunit protein uS10 (105 aa).

The protein belongs to the universal ribosomal protein uS10 family. Part of the 30S ribosomal subunit.

Involved in the binding of tRNA to the ribosomes. This Synechococcus sp. (strain JA-3-3Ab) (Cyanobacteria bacterium Yellowstone A-Prime) protein is Small ribosomal subunit protein uS10.